The chain runs to 710 residues: multidrug resistance regulator 2 (710 aa).

Residues 11 to 37 (CDACRSRKIKCNRQTPCASCHKSKRDC) constitute a DNA-binding region (zn(2)-C6 fungal-type). Transmembrane regions (helical) follow at residues 475 to 495 (DLVIFSVNFLLVYMYYSLYLF) and 525 to 545 (LFLAYFNLNYIHLVLMITNFL).

It is found in the nucleus. The protein localises to the membrane. Functionally, transcription factor that controls the expression of CDR1, the major multidrug efflux pump. Required for yeast cell adherence to silicone substrate and plays a role in virulence. The polypeptide is multidrug resistance regulator 2 (Candida albicans (strain SC5314 / ATCC MYA-2876) (Yeast)).